Consider the following 384-residue polypeptide: Flap endonuclease 1 (384 aa).

Residues 1–105 form an N-domain region; it reads MGVKGLNQLI…GELEKRLLKR (105 aa). Position 34 (aspartate 34) interacts with Mg(2+). DNA-binding residues include arginine 47 and arginine 71. The Mg(2+) site is built by aspartate 87, glutamate 159, glutamate 161, aspartate 180, and aspartate 182. Residues 123 to 254 are I-domain; sequence DMTKYQKRLV…VTAYKLIKEH (132 aa). Position 159 (glutamate 159) interacts with DNA. 2 residues coordinate DNA: glycine 232 and aspartate 234. Aspartate 234 is a binding site for Mg(2+). An interaction with PCNA region spans residues 341-349; that stretch reads IQGRLDGFF. The interval 354–384 is disordered; it reads KYSNTSPLGKDDKKRKTNDKKGAAAKKTKRR. Positions 362–375 are enriched in basic and acidic residues; that stretch reads GKDDKKRKTNDKKG.

The protein belongs to the XPG/RAD2 endonuclease family. FEN1 subfamily. As to quaternary structure, interacts with PCNA. Three molecules of FEN1 bind to one PCNA trimer with each molecule binding to one PCNA monomer. PCNA stimulates the nuclease activity without altering cleavage specificity. Mg(2+) is required as a cofactor. Phosphorylated. Phosphorylation upon DNA damage induces relocalization to the nuclear plasma.

It localises to the nucleus. Its subcellular location is the nucleolus. The protein resides in the nucleoplasm. It is found in the mitochondrion. Its function is as follows. Structure-specific nuclease with 5'-flap endonuclease and 5'-3' exonuclease activities involved in DNA replication and repair. During DNA replication, cleaves the 5'-overhanging flap structure that is generated by displacement synthesis when DNA polymerase encounters the 5'-end of a downstream Okazaki fragment. It enters the flap from the 5'-end and then tracks to cleave the flap base, leaving a nick for ligation. Also involved in the long patch base excision repair (LP-BER) pathway, by cleaving within the apurinic/apyrimidinic (AP) site-terminated flap. Acts as a genome stabilization factor that prevents flaps from equilibrating into structures that lead to duplications and deletions. Also possesses 5'-3' exonuclease activity on nicked or gapped double-stranded DNA, and exhibits RNase H activity. Also involved in replication and repair of rDNA and in repairing mitochondrial DNA. In Lodderomyces elongisporus (strain ATCC 11503 / CBS 2605 / JCM 1781 / NBRC 1676 / NRRL YB-4239) (Yeast), this protein is Flap endonuclease 1.